A 371-amino-acid polypeptide reads, in one-letter code: Chaperone protein DnaJ (371 aa).

The region spanning 5–69 (DYYEVLGLSK…QKRAQYDQFG (65 aa)) is the J domain. A CR-type zinc finger spans residues 133–215 (GKELNVEIPV…CHGSGKVRKR (83 aa)). Zn(2+) contacts are provided by cysteine 146, cysteine 149, cysteine 163, cysteine 166, cysteine 189, cysteine 192, cysteine 203, and cysteine 206. CXXCXGXG motif repeat units lie at residues 146-153 (CDTCKGSG), 163-170 (CKHCSGSG), 189-196 (CGHCSGTG), and 203-210 (CTTCHGSG).

It belongs to the DnaJ family. Homodimer. Zn(2+) is required as a cofactor.

The protein localises to the cytoplasm. Its function is as follows. Participates actively in the response to hyperosmotic and heat shock by preventing the aggregation of stress-denatured proteins and by disaggregating proteins, also in an autonomous, DnaK-independent fashion. Unfolded proteins bind initially to DnaJ; upon interaction with the DnaJ-bound protein, DnaK hydrolyzes its bound ATP, resulting in the formation of a stable complex. GrpE releases ADP from DnaK; ATP binding to DnaK triggers the release of the substrate protein, thus completing the reaction cycle. Several rounds of ATP-dependent interactions between DnaJ, DnaK and GrpE are required for fully efficient folding. Also involved, together with DnaK and GrpE, in the DNA replication of plasmids through activation of initiation proteins. This chain is Chaperone protein DnaJ, found in Bacillus cereus (strain G9842).